The primary structure comprises 185 residues: Protein-arginine kinase activator protein (185 aa).

Phosphoarginine is present on residues arginine 115 and arginine 169. The region spanning 139 to 174 (RRQIDMLKKELESLIHQEEFENAAHVRDQIRLLEQS) is the UVR domain.

As to quaternary structure, interacts with McsB. In terms of processing, phosphorylated on Arg residues by McsB.

Functionally, activates the phosphorylation activity of the protein-arginine kinase McsB. Is required for the delocalization of competence proteins from the cell poles. The sequence is that of Protein-arginine kinase activator protein (mcsA) from Bacillus subtilis (strain 168).